The chain runs to 535 residues: Reticuline oxidase (535 aa).

Positions 1-23 (MMCRSLTLRFFLFIVLLQTCVRG) are cleaved as a signal peptide. Residue asparagine 42 is glycosylated (N-linked (GlcNAc...) asparagine). Positions 71–245 (TVSKPSFIVM…YAWKIKLLPV (175 aa)) constitute an FAD-binding PCMH-type domain. A cross-link (6-(S-cysteinyl)-8alpha-(pros-histidyl)-FAD (His-Cys)) is located at residues 108 to 170 (HSYEGLSYTA…DTLGFTAGWC (63 aa)). Asparagine 475 is a glycosylation site (N-linked (GlcNAc...) asparagine).

It belongs to the oxygen-dependent FAD-linked oxidoreductase family. It depends on FAD as a cofactor. A metal cation is required as a cofactor. The FAD cofactor is bound via a bicovalent 6-S-cysteinyl, 8alpha-N1-histidyl FAD linkage. As to expression, expressed in roots and stems. Not detected in leaves or reproductive organs. Restricted to the parietal region of sieve elements adjacent or proximal to laticifers.

It localises to the cytoplasmic vesicle. It catalyses the reaction (S)-reticuline + O2 = (S)-scoulerine + H2O2 + H(+). The protein operates within alkaloid biosynthesis; (S)-scoulerine biosynthesis; (S)-scoulerine from (S)-reticuline: step 1/1. In terms of biological role, oxygen-dependent FAD-dependent oxidoreductase essential to the formation of benzophenanthridine alkaloids in the response of plants to pathogenic attack. Catalyzes the stereospecific conversion of the N-methyl moiety of (S)-reticuline into the berberine bridge carbon of (S)-scoulerine. Involved in the biosynthesis of sanguinarine. This chain is Reticuline oxidase (BBE1), found in Papaver somniferum (Opium poppy).